We begin with the raw amino-acid sequence, 73 residues long: Putative membrane protein insertion efficiency factor (73 aa).

The protein belongs to the UPF0161 family.

It is found in the cell inner membrane. Could be involved in insertion of integral membrane proteins into the membrane. The polypeptide is Putative membrane protein insertion efficiency factor (Bacteroides fragilis (strain ATCC 25285 / DSM 2151 / CCUG 4856 / JCM 11019 / LMG 10263 / NCTC 9343 / Onslow / VPI 2553 / EN-2)).